The chain runs to 180 residues: Ribulose bisphosphate carboxylase small subunit, chloroplastic (180 aa).

Residues 1-56 (MASSIMSSAAVATRSNGAQASMVAPFTGLKSNASFPVSRKTNLDITSIASNGGRVR) constitute a chloroplast transit peptide.

It belongs to the RuBisCO small chain family. As to quaternary structure, heterohexadecamer of 8 large and 8 small subunits.

It localises to the plastid. The protein localises to the chloroplast. In terms of biological role, ruBisCO catalyzes two reactions: the carboxylation of D-ribulose 1,5-bisphosphate, the primary event in carbon dioxide fixation, as well as the oxidative fragmentation of the pentose substrate. Both reactions occur simultaneously and in competition at the same active site. Although the small subunit is not catalytic it is essential for maximal activity. The polypeptide is Ribulose bisphosphate carboxylase small subunit, chloroplastic (Stellaria longipes (Longstalk starwort)).